Reading from the N-terminus, the 250-residue chain is Small ribosomal subunit protein uS2 (250 aa).

Belongs to the universal ribosomal protein uS2 family.

The chain is Small ribosomal subunit protein uS2 from Paracidovorax citrulli (strain AAC00-1) (Acidovorax citrulli).